The following is a 303-amino-acid chain: Taste receptor type 2 member 13 (303 aa).

At 1–7 (MKSALPS) the chain is on the extracellular side. The helical transmembrane segment at 8 to 28 (IFTLVIIAEFIIGNLSNGFIV) threads the bilayer. Over 29-55 (LINCIDWVSKRELSSVDKLLIILAISR) the chain is Cytoplasmic. The chain crosses the membrane as a helical span at residues 56 to 76 (IGLIWEILVSWFLALHYLAIF). At 77–85 (VSGTGLRIM) the chain is on the extracellular side. A helical transmembrane segment spans residues 86–106 (IFSWIVSNHFNLWLATILSIF). Over 107-128 (YLLKIASFSSPAFLYLKWRVNK) the chain is Cytoplasmic. A helical transmembrane segment spans residues 129–149 (VILLILLGTLVFLFLNLIQIN). Topologically, residues 150–184 (MHIKDWLDRYERNTTWNFSMSDFETFSVSVKFTMT) are extracellular. Residues N162 and N166 are each glycosylated (N-linked (GlcNAc...) asparagine). A helical membrane pass occupies residues 185 to 205 (MFSLTPFTVAFISFLLLIFSL). Residues 206–232 (QKHLQKMQLNYKGHRDPKTKVHTNALK) lie on the Cytoplasmic side of the membrane. A helical membrane pass occupies residues 233 to 253 (IVISFLLFYASFFLCVLXSWI). Residues 254–261 (SELYQNTV) are Extracellular-facing. Residues 262–282 (IYMLCETIGVFYPSSHSFLLI) form a helical membrane-spanning segment. Over 283–303 (LGNAKLRQAFLLVAAKVWAKR) the chain is Cytoplasmic.

This sequence belongs to the G-protein coupled receptor T2R family.

It localises to the membrane. In terms of biological role, receptor that may play a role in the perception of bitterness and is gustducin-linked. May play a role in sensing the chemical composition of the gastrointestinal content. The activity of this receptor may stimulate alpha gustducin, mediate PLC-beta-2 activation and lead to the gating of TRPM5. In Gorilla gorilla gorilla (Western lowland gorilla), this protein is Taste receptor type 2 member 13 (TAS2R13).